Reading from the N-terminus, the 1331-residue chain is Lysine-specific demethylase 3A-A (1331 aa).

3 disordered regions span residues 243–280 (LNDKSRKPRAPKRKSQDTESEDQTELKQTRNEEVPSKD), 358–381 (TPPQANSPPSFGAATPQGKGTQNL), and 497–532 (KVVKKPENNHTSVRAIKPQEPPYPKSPNKNDGVTYP). Residues 266-280 (TELKQTRNEEVPSKD) show a composition bias toward basic and acidic residues. The C6-type zinc-finger motif lies at 683-708 (CDACDTTIFNLHWVCPKCGFGVCVDC). The LXXLL motif motif lies at 894–898 (LRNLL). In terms of domain architecture, JmjC spans 1086 to 1291 (RREGKLNLAA…HCFWLTQEFR (206 aa)). Residues His1130, Asp1132, and His1259 each coordinate Fe cation.

The protein belongs to the JHDM2 histone demethylase family. It depends on Fe(2+) as a cofactor.

It localises to the cytoplasm. The protein localises to the nucleus. It carries out the reaction N(6),N(6)-dimethyl-L-lysyl(9)-[histone H3] + 2 2-oxoglutarate + 2 O2 = L-lysyl(9)-[histone H3] + 2 formaldehyde + 2 succinate + 2 CO2. Its function is as follows. Histone demethylase that specifically demethylates 'Lys-9' of histone H3, thereby playing a central role in histone code. Preferentially demethylates mono- and dimethylated H3 'Lys-9' residue, with a preference for dimethylated residue, while it has weak or no activity on trimethylated H3 'Lys-9'. Demethylation of Lys residue generates formaldehyde and succinate. This Xenopus laevis (African clawed frog) protein is Lysine-specific demethylase 3A-A (kdm3a-a).